The following is a 784-amino-acid chain: SWI/SNF complex subunit SWI3C homolog (784 aa).

A compositionally biased stretch (polar residues) spans 1-10 (MPRKASSTSD). The tract at residues 1–68 (MPRKASSTSD…PEDADDETLA (68 aa)) is disordered. Residues 24–39 (ASPSPSNRSSAAAAAA) show a composition bias toward low complexity. The span at 43-66 (DDSDSAAVNEDDDSAVPEDADDET) shows a compositional bias: acidic residues. One can recognise an SWIRM domain in the interval 185 to 284 (HVVPKHSDWF…YLASGSVHRG (100 aa)). Residues 355–409 (LSESSCSYCLQPLTSLHYQSLKEADIALCSDCFHDARYITGHSSLDFQRIDGDND) form a ZZ-type; degenerate zinc finger. 4 residues coordinate Zn(2+): C360, C363, C383, and C386. Residues 413–464 (NDGDSWTDQETLLLLEGIEKYNDNWNNIAEHVGTKSKAQCIYHFIRLPVEDG) form the SANT domain. 2 disordered regions span residues 667 to 702 (LASP…SMPQ) and 760 to 784 (GMPN…SSVG). A compositionally biased stretch (low complexity) spans 675-695 (PGGSTSTMSSNPMSMSPRPMG).

As to quaternary structure, interacts with LFR. Interacts with NMCP1.

Its subcellular location is the nucleus. It localises to the nucleoplasm. Its function is as follows. Component of a multiprotein complex equivalent of the SWI/SNF complex, an ATP-dependent chromatin-remodeling complex, which is required for the positive and negative regulation of gene expression of a large number of genes. It changes chromatin structure by altering DNA-histone contacts within a nucleosome, leading eventually to a change in nucleosome position, thus facilitating or repressing binding of gene-specific transcription factors. May be involved in positive response to drought stress and modulation of root growth through its interaction with NMCP1. In Oryza sativa subsp. japonica (Rice), this protein is SWI/SNF complex subunit SWI3C homolog.